Reading from the N-terminus, the 152-residue chain is Large ribosomal subunit protein uL15 (152 aa).

A disordered region spans residues M1–V79. Residues G22–Q35 are compositionally biased toward gly residues.

The protein belongs to the universal ribosomal protein uL15 family. Part of the 50S ribosomal subunit.

In terms of biological role, binds to the 23S rRNA. The polypeptide is Large ribosomal subunit protein uL15 (Rubrobacter xylanophilus (strain DSM 9941 / JCM 11954 / NBRC 16129 / PRD-1)).